The following is a 104-amino-acid chain: Large ribosomal subunit protein uL15z (104 aa).

It belongs to the universal ribosomal protein uL15 family.

The chain is Large ribosomal subunit protein uL15z (RPL27AA) from Arabidopsis thaliana (Mouse-ear cress).